We begin with the raw amino-acid sequence, 545 residues long: CTP synthase (545 aa).

The interval 1–266 (MTTNYIFVTG…DDYICKRFSL (266 aa)) is amidoligase domain. Ser-14 is a CTP binding site. Position 14 (Ser-14) interacts with UTP. ATP-binding positions include 15-20 (SLGKGI) and Asp-72. 2 residues coordinate Mg(2+): Asp-72 and Glu-140. Residues 147 to 149 (DIE), 187 to 192 (KTKPTQ), and Lys-223 each bind CTP. UTP contacts are provided by residues 187–192 (KTKPTQ) and Lys-223. 239 to 241 (KDV) is a binding site for ATP. One can recognise a Glutamine amidotransferase type-1 domain in the interval 291–542 (TIGMVGKYIE…VKAANEHQKR (252 aa)). Residue Gly-352 coordinates L-glutamine. Cys-379 functions as the Nucleophile; for glutamine hydrolysis in the catalytic mechanism. L-glutamine is bound by residues 380-383 (LGMQ), Glu-403, and Arg-470. Catalysis depends on residues His-515 and Glu-517.

Belongs to the CTP synthase family. In terms of assembly, homotetramer.

The enzyme catalyses UTP + L-glutamine + ATP + H2O = CTP + L-glutamate + ADP + phosphate + 2 H(+). It carries out the reaction L-glutamine + H2O = L-glutamate + NH4(+). It catalyses the reaction UTP + NH4(+) + ATP = CTP + ADP + phosphate + 2 H(+). It functions in the pathway pyrimidine metabolism; CTP biosynthesis via de novo pathway; CTP from UDP: step 2/2. With respect to regulation, allosterically activated by GTP, when glutamine is the substrate; GTP has no effect on the reaction when ammonia is the substrate. The allosteric effector GTP functions by stabilizing the protein conformation that binds the tetrahedral intermediate(s) formed during glutamine hydrolysis. Inhibited by the product CTP, via allosteric rather than competitive inhibition. Functionally, catalyzes the ATP-dependent amination of UTP to CTP with either L-glutamine or ammonia as the source of nitrogen. Regulates intracellular CTP levels through interactions with the four ribonucleotide triphosphates. The polypeptide is CTP synthase (Salmonella newport (strain SL254)).